Consider the following 453-residue polypeptide: AP-4 complex subunit mu-1 (453 aa).

The MHD domain maps to 184–452; it reads KNEVFLDVVE…LSHSNAYVIR (269 aa). Residues 383–403 form a disordered region; that stretch reads PGLQGPPSRGPSPSAPPLGLG.

Belongs to the adaptor complexes medium subunit family. In terms of assembly, adaptor protein complex 4 (AP-4) is a heterotetramer composed of two large adaptins (epsilon-type subunit AP4E1 and beta-type subunit AP4B1), a medium adaptin (mu-type subunit AP4M1) and a small adaptin (sigma-type AP4S1). Interacts with tyrosine-based sorting signals on the cytoplasmic tail of cargo proteins such as APP, ATG9A, LAMP2 and NAGPA. Interacts with the C-terminal domain of GRID2. Interacts with GRIA1 and GRIA2; the interaction is indirect via CACNG3. Interacts with CACNG3; CACNG3 associates GRIA1 and GRIA2 with the adaptor protein complex 4 (AP-4) to target them to the somatodendritic compartment of neurons. Interacts with HOOK1 and HOOK2; the interactions are direct, mediate the interaction between FTS-Hook-FHIP (FHF) complex and AP-4 and the perinuclear distribution of AP-4. As to expression, high levels in the olfactory bulb, the cerebral cortex, the granule and Purkinje cell layers of the cerebellar cortex and the CA3 region of the hippocampus. Low levels found in molecular layer of cerebellum.

It is found in the golgi apparatus. The protein resides in the trans-Golgi network membrane. The protein localises to the early endosome. In terms of biological role, component of the adaptor protein complex 4 (AP-4). Adaptor protein complexes are vesicle coat components involved both in vesicle formation and cargo selection. They control the vesicular transport of proteins in different trafficking pathways. AP-4 forms a non clathrin-associated coat on vesicles departing the trans-Golgi network (TGN) and may be involved in the targeting of proteins from the trans-Golgi network (TGN) to the endosomal-lysosomal system. It is also involved in protein sorting to the basolateral membrane in epithelial cells and the proper asymmetric localization of somatodendritic proteins in neurons. Within AP-4, the mu-type subunit AP4M1 is directly involved in the recognition and binding of tyrosine-based sorting signals found in the cytoplasmic part of cargos. The adaptor protein complex 4 (AP-4) may also recognize other types of sorting signal. The polypeptide is AP-4 complex subunit mu-1 (Rattus norvegicus (Rat)).